The sequence spans 1322 residues: Transcription elongation factor SPT6-like (1322 aa).

A compositionally biased stretch (basic and acidic residues) spans 1 to 17 (MNRIDEEPQIHEDPVEN). Disordered stretches follow at residues 1–65 (MNRI…KKDE) and 90–113 (KRLKKSSEEEDKINNDDDDDDLSH). Positions 18-33 (REEDDEDEDDQYEFDD) are enriched in acidic residues. The span at 48 to 65 (EQRHCSEKKSRSRRKKDE) shows a compositional bias: basic and acidic residues. The segment covering 97 to 110 (EEEDKINNDDDDDD) has biased composition (acidic residues). The S1 motif domain maps to 1017-1088 (GRIVQATVKK…QRYHVLLVCK (72 aa)).

Belongs to the SPT6 family.

It is found in the nucleus. Transcription elongation factor that enhances the transcription elongation by RNA polymerase II (RNAPII). In Arabidopsis thaliana (Mouse-ear cress), this protein is Transcription elongation factor SPT6-like.